We begin with the raw amino-acid sequence, 892 residues long: Alanine--tRNA ligase (892 aa).

H593, H597, C694, and H698 together coordinate Zn(2+).

The protein belongs to the class-II aminoacyl-tRNA synthetase family. Zn(2+) serves as cofactor.

The protein resides in the cytoplasm. The enzyme catalyses tRNA(Ala) + L-alanine + ATP = L-alanyl-tRNA(Ala) + AMP + diphosphate. In terms of biological role, catalyzes the attachment of alanine to tRNA(Ala) in a two-step reaction: alanine is first activated by ATP to form Ala-AMP and then transferred to the acceptor end of tRNA(Ala). Also edits incorrectly charged Ser-tRNA(Ala) and Gly-tRNA(Ala) via its editing domain. The chain is Alanine--tRNA ligase from Helicobacter hepaticus (strain ATCC 51449 / 3B1).